A 287-amino-acid polypeptide reads, in one-letter code: Transmembrane protein 163 (287 aa).

The tract at residues 1 to 63 is disordered; that stretch reads METAAGSERR…ESGQFSDGLE (63 aa). Residues 1–86 are Cytoplasmic-facing; that stretch reads METAAGSERR…HEAQNYRKKA (86 aa). 4 positions are modified to phosphoserine: Ser11, Ser53, Ser55, and Ser59. Positions 40–70 are required for interaction with MCOLN1; the sequence is EPPQPEEERQLRISESGQFSDGLEDRGLLES. A helical transmembrane segment spans residues 87-107; the sequence is LWVSWFSIIVTLALAVAAFTV. Residues 108–114 lie on the Extracellular side of the membrane; it reads SVMRYSA. A helical membrane pass occupies residues 115–135; sequence SAFGFAFDAILDVLSSAIVLW. Topologically, residues 136–148 are cytoplasmic; the sequence is RYSNAAAVHSAHR. A helical membrane pass occupies residues 149–169; sequence EYIACVILGVIFLLSSVCIVV. Residues 170-185 lie on the Extracellular side of the membrane; the sequence is KAIHDLSTKLLPEVDD. A helical transmembrane segment spans residues 186-206; it reads FLFSVSILSGILCSILAVLKF. The Cytoplasmic portion of the chain corresponds to 207-215; the sequence is MLGKVLTSR. The chain crosses the membrane as a helical span at residues 216–236; that stretch reads ALITDGFNSLVGGVMGFSILL. Residues 237–253 are Extracellular-facing; the sequence is SAEVFKHNSAVWYLDGS. Residues 254-274 traverse the membrane as a helical segment; the sequence is IGVLIGLTIFAYGVKLLIDMV. The Cytoplasmic segment spans residues 275 to 287; sequence PRVRQTRHYEMFE.

The protein belongs to the TMEM163 family. As to quaternary structure, homodimer. Interacts with MCOLN1/TRPML1. Interacts with SLC30A1, SLC30A2, SLC30A3 and SLC30A4.

It localises to the cytoplasmic vesicle. It is found in the secretory vesicle. Its subcellular location is the synaptic vesicle membrane. The protein localises to the early endosome membrane. The protein resides in the late endosome membrane. It localises to the lysosome membrane. It is found in the cell membrane. The enzyme catalyses Zn(2+)(in) = Zn(2+)(out). Its function is as follows. Zinc ion transporter that mediates zinc efflux and plays a crucial role in intracellular zinc homeostasis. Binds the divalent cations Zn(2+), Ni(2+), and to a minor extent Cu(2+). Is a functional modulator of P2X purinoceptors, including P2RX1, P2RX3, P2RX4 and P2RX7. Plays a role in central nervous system development and is required for myelination, and survival and proliferation of oligodendrocytes. In Bos taurus (Bovine), this protein is Transmembrane protein 163 (TMEM163).